A 598-amino-acid polypeptide reads, in one-letter code: Vanadium-dependent bromoperoxidase (598 aa).

Residues phenylalanine 361, glutamine 363, aspartate 365, aspartate 368, and glutamine 370 each coordinate Ca(2+). Vanadate contacts are provided by lysine 400 and arginine 408. Histidine 480 is an active-site residue. Residues serine 485, glycine 486, histidine 487, arginine 547, and histidine 553 each contribute to the vanadate site. Histidine 487 is an active-site residue.

The protein belongs to the vanadium-dependent haloperoxidase family. As to quaternary structure, homododecamer. The cofactor is Ca(2+). Vanadate is required as a cofactor.

It catalyses the reaction RH + Br(-) + H2O2 = RBr + 2 H2O.. In terms of biological role, catalyzes the halogenation of organic substrates in the presence of hydrogen peroxide. The chain is Vanadium-dependent bromoperoxidase from Corallina officinalis (Coral seaweed).